Reading from the N-terminus, the 363-residue chain is NAD(P)H-quinone oxidoreductase subunit 1, chloroplastic (363 aa).

6 consecutive transmembrane segments (helical) span residues 30–50, 98–118, 129–149, 248–268, 300–320, and 336–356; these read LVPIFTPVLGITIGVLAIVWL, FSIGPSIAVISILLSYLIIPF, IGVFLWIAISSIAPIGLLMSG, YSGIKFGLFYVASYLNLLVSS, VFGTTIGIFITLAKTYLFLFI, and LLNLGWKFLLPISLGNLLLTT.

Belongs to the complex I subunit 1 family. In terms of assembly, NDH is composed of at least 16 different subunits, 5 of which are encoded in the nucleus.

It localises to the plastid. The protein localises to the chloroplast thylakoid membrane. It catalyses the reaction a plastoquinone + NADH + (n+1) H(+)(in) = a plastoquinol + NAD(+) + n H(+)(out). The catalysed reaction is a plastoquinone + NADPH + (n+1) H(+)(in) = a plastoquinol + NADP(+) + n H(+)(out). NDH shuttles electrons from NAD(P)H:plastoquinone, via FMN and iron-sulfur (Fe-S) centers, to quinones in the photosynthetic chain and possibly in a chloroplast respiratory chain. The immediate electron acceptor for the enzyme in this species is believed to be plastoquinone. Couples the redox reaction to proton translocation, and thus conserves the redox energy in a proton gradient. The polypeptide is NAD(P)H-quinone oxidoreductase subunit 1, chloroplastic (Vitis vinifera (Grape)).